Here is a 295-residue protein sequence, read N- to C-terminus: Protein FAM221A (295 aa).

The segment at 244–295 (SEPPGIDKQVSSMRLSEEDDMAYFERRYQERLRKEKEHKRQKNSKPPTTQRP) is disordered. Basic and acidic residues predominate over residues 266–278 (YFERRYQERLRKE).

This sequence belongs to the FAM221 family.

This is Protein FAM221A (fam221a) from Xenopus laevis (African clawed frog).